Here is a 47-residue protein sequence, read N- to C-terminus: Photosystem II reaction center protein K (47 aa).

A propeptide spanning residues 1 to 10 (MNIGFDMILA) is cleaved from the precursor. The helical transmembrane segment at 22–42 (LVDVLPVIPLLFLLLAFVWQA) threads the bilayer.

Belongs to the PsbK family. As to quaternary structure, PSII is composed of 1 copy each of membrane proteins PsbA, PsbB, PsbC, PsbD, PsbE, PsbF, PsbH, PsbI, PsbJ, PsbK, PsbL, PsbM, PsbT, PsbX, PsbY, PsbZ, Psb30/Ycf12, at least 3 peripheral proteins of the oxygen-evolving complex and a large number of cofactors. It forms dimeric complexes.

It is found in the plastid. It localises to the chloroplast thylakoid membrane. Its function is as follows. One of the components of the core complex of photosystem II (PSII). PSII is a light-driven water:plastoquinone oxidoreductase that uses light energy to abstract electrons from H(2)O, generating O(2) and a proton gradient subsequently used for ATP formation. It consists of a core antenna complex that captures photons, and an electron transfer chain that converts photonic excitation into a charge separation. The sequence is that of Photosystem II reaction center protein K from Mesostigma viride (Green alga).